Here is a 1020-residue protein sequence, read N- to C-terminus: Phosphatidylinositol 3-kinase VPS34 (1020 aa).

A C2 PI3K-type domain is found at 49 to 210 (LSTKFEDPTV…NWLDKMVLPK (162 aa)). Positions 331-577 (DKELKPTPQL…DGPIKIYMDI (247 aa)) constitute a PIK helical domain. The PI3K/PI4K catalytic domain maps to 666–1004 (YPEESSVFKS…LINDSVNAFL (339 aa)). A G-loop region spans residues 672–678 (VFKSSLA). The interval 873–881 (GVGDRHLDN) is catalytic loop. The interval 892–913 (HADFGYILGRDPKPFPPLMKLP) is activation loop.

Belongs to the PI3/PI4-kinase family. In terms of assembly, component of the autophagy-specific VPS34 PI3-kinase complex I composed of at least VPS15, VPS30, VPS34, and of the VPS34 PI3-kinase complex II composed of VPS15, VPS30, VPS34 and VPS38. Interacts with VMNA7. Autophosphorylated.

The protein resides in the golgi apparatus. It is found in the trans-Golgi network membrane. The protein localises to the endosome membrane. The catalysed reaction is a 1,2-diacyl-sn-glycero-3-phospho-(1D-myo-inositol) + ATP = a 1,2-diacyl-sn-glycero-3-phospho-(1D-myo-inositol-3-phosphate) + ADP + H(+). In terms of biological role, multifunctional phosphatidylinositol 3-kinase involved in acidification of vacuoles, pH-dependent cell growth, and autophagocytosis. Plays an important role in protein transport and virulence. Component of the autophagy-specific VPS34 PI3-kinase complex I essential to recruit the ATG8-phosphatidylinositol conjugate and the ATG12-ATG5 conjugate to the pre-autophagosomal structure. Also involved in endosome-to-Golgi retrograde transport as part of the VPS34 PI3-kinase complex II. This second complex is required for the endosome-to-Golgi retrieval of PEP1 and KEX2, and the recruitment of VPS5 and VPS7, two components of the retromer complex, to endosomal membranes (probably through the synthesis of a specific pool of phosphatidylinositol 3-phosphate recruiting the retromer to the endosomes). Finally, it might also be involved in ethanol tolerance and cell wall integrity. The chain is Phosphatidylinositol 3-kinase VPS34 from Candida albicans (Yeast).